A 476-amino-acid chain; its full sequence is MSDRSDPTHAIWQKVLAALTADDRITPQLHGFISLVEPKGVMTGTLYLEVPNDLTRGMLEQRIRVPLLNAIGSLDEAAGVSNFAIVVNPGIAQDAFAQHPEPAEQPYIETPTITAPTDNPGLPASPSRGDSRLNPKYGFDTFVIGGSNRFAHAAAVAVAEAPAKAYNPLFIYGDSGLGKTHLLHAIGHYAISLYPGIRVRYVSSEEFTNDFINSIANNRSSLFQSRYRDNDILLIDDIQFLQGKDSTQEAFFHTFNTLHDHNKQVVITSDLPPKHLTGFEDRMRSRFEWGLITDVQAPDLETRIAILRKKAQSEKLQVPDDILEYMATKVTSNIRELEGTLIRVTAFASLNKTPVDLALVQTVLKDLITLDEDNVIAPVDIINHTAAYFKLTVDDLYGSSRSQAVATARQIAMYLCRELTNLSLPKIGQLFGNRDHTTVMYANKKITELMKERRSIYNQVTELTSRIKQNHRYGKM.

The tract at residues 1-87 (MSDRSDPTHA…AGVSNFAIVV (87 aa)) is domain I, interacts with DnaA modulators. A domain II region spans residues 87–131 (VNPGIAQDAFAQHPEPAEQPYIETPTITAPTDNPGLPASPSRGDS). A domain III, AAA+ region region spans residues 132 to 348 (RLNPKYGFDT…GTLIRVTAFA (217 aa)). Residues glycine 176, glycine 178, lysine 179, and threonine 180 each coordinate ATP. Residues 349–476 (SLNKTPVDLA…IKQNHRYGKM (128 aa)) form a domain IV, binds dsDNA region.

Belongs to the DnaA family. Oligomerizes as a right-handed, spiral filament on DNA at oriC.

The protein resides in the cytoplasm. Plays an essential role in the initiation and regulation of chromosomal replication. ATP-DnaA binds to the origin of replication (oriC) to initiate formation of the DNA replication initiation complex once per cell cycle. Binds the DnaA box (a 9 base pair repeat at the origin) and separates the double-stranded (ds)DNA. Forms a right-handed helical filament on oriC DNA; dsDNA binds to the exterior of the filament while single-stranded (ss)DNA is stabiized in the filament's interior. The ATP-DnaA-oriC complex binds and stabilizes one strand of the AT-rich DNA unwinding element (DUE), permitting loading of DNA polymerase. After initiation quickly degrades to an ADP-DnaA complex that is not apt for DNA replication. Binds acidic phospholipids. In Clavibacter sepedonicus (Clavibacter michiganensis subsp. sepedonicus), this protein is Chromosomal replication initiator protein DnaA.